The primary structure comprises 321 residues: Glucokinase (321 aa).

Residue 8-13 (GDVGGT) participates in ATP binding.

Belongs to the bacterial glucokinase family.

The protein resides in the cytoplasm. The catalysed reaction is D-glucose + ATP = D-glucose 6-phosphate + ADP + H(+). This chain is Glucokinase, found in Citrobacter koseri (strain ATCC BAA-895 / CDC 4225-83 / SGSC4696).